A 136-amino-acid polypeptide reads, in one-letter code: MRHKIKSRKLNVTSSHRQAMLANMAVALVTHEQIKTTLPKAKELRPYIETLITKAKKADLMVRRSVLSKIKDKTAVEKLINILGIRYKDRPGGYTRIIKAGFRYGDLAPIAYIEFVDRDINAKGNIQQDANEEIKN.

Belongs to the bacterial ribosomal protein bL17 family. Part of the 50S ribosomal subunit. Contacts protein L32.

In Rickettsia africae (strain ESF-5), this protein is Large ribosomal subunit protein bL17.